The primary structure comprises 176 residues: NAD(P)H-quinone oxidoreductase subunit 6, chloroplastic (176 aa).

5 consecutive transmembrane segments (helical) span residues 10-30 (ILVL…VLLT), 33-53 (TFSA…YILL), 60-80 (VAQL…AVMF), 92-112 (FWTI…FSLM), and 152-172 (FYLP…GAIT).

The protein belongs to the complex I subunit 6 family. In terms of assembly, NDH is composed of at least 16 different subunits, 5 of which are encoded in the nucleus.

It localises to the plastid. The protein resides in the chloroplast thylakoid membrane. The catalysed reaction is a plastoquinone + NADH + (n+1) H(+)(in) = a plastoquinol + NAD(+) + n H(+)(out). It catalyses the reaction a plastoquinone + NADPH + (n+1) H(+)(in) = a plastoquinol + NADP(+) + n H(+)(out). Its function is as follows. NDH shuttles electrons from NAD(P)H:plastoquinone, via FMN and iron-sulfur (Fe-S) centers, to quinones in the photosynthetic chain and possibly in a chloroplast respiratory chain. The immediate electron acceptor for the enzyme in this species is believed to be plastoquinone. Couples the redox reaction to proton translocation, and thus conserves the redox energy in a proton gradient. This is NAD(P)H-quinone oxidoreductase subunit 6, chloroplastic (ndhG) from Oryza nivara (Indian wild rice).